Consider the following 364-residue polypeptide: DNA replication and repair protein RecF (364 aa).

Position 30–37 (30–37 (GDNAQGKT)) interacts with ATP.

The protein belongs to the RecF family.

Its subcellular location is the cytoplasm. In terms of biological role, the RecF protein is involved in DNA metabolism; it is required for DNA replication and normal SOS inducibility. RecF binds preferentially to single-stranded, linear DNA. It also seems to bind ATP. This chain is DNA replication and repair protein RecF, found in Clostridium kluyveri (strain ATCC 8527 / DSM 555 / NBRC 12016 / NCIMB 10680 / K1).